The sequence spans 412 residues: Multifunctional CCA protein (412 aa).

ATP is bound by residues Gly8 and Arg11. 2 residues coordinate CTP: Gly8 and Arg11. The Mg(2+) site is built by Asp21 and Asp23. ATP-binding residues include Arg91, Arg137, and Arg140. CTP is bound by residues Arg91, Arg137, and Arg140. The HD domain maps to 226–327 (TGIHTMMVID…VTLFEKTDAL (102 aa)).

Belongs to the tRNA nucleotidyltransferase/poly(A) polymerase family. Bacterial CCA-adding enzyme type 1 subfamily. As to quaternary structure, monomer. Can also form homodimers and oligomers. Mg(2+) serves as cofactor. It depends on Ni(2+) as a cofactor.

The enzyme catalyses a tRNA precursor + 2 CTP + ATP = a tRNA with a 3' CCA end + 3 diphosphate. The catalysed reaction is a tRNA with a 3' CCA end + 2 CTP + ATP = a tRNA with a 3' CCACCA end + 3 diphosphate. Functionally, catalyzes the addition and repair of the essential 3'-terminal CCA sequence in tRNAs without using a nucleic acid template. Adds these three nucleotides in the order of C, C, and A to the tRNA nucleotide-73, using CTP and ATP as substrates and producing inorganic pyrophosphate. tRNA 3'-terminal CCA addition is required both for tRNA processing and repair. Also involved in tRNA surveillance by mediating tandem CCA addition to generate a CCACCA at the 3' terminus of unstable tRNAs. While stable tRNAs receive only 3'-terminal CCA, unstable tRNAs are marked with CCACCA and rapidly degraded. This Dechloromonas aromatica (strain RCB) protein is Multifunctional CCA protein.